We begin with the raw amino-acid sequence, 150 residues long: UPF0756 membrane protein STH2648 (150 aa).

Transmembrane regions (helical) follow at residues 13 to 33 (ALGVVARNALIVTAAGVVLIL), 52 to 72 (AGLIFLLIAVLVPFATGEVGW), 85 to 105 (LAAILGGIIAAVLSGYGVTLL), and 111 to 131 (VIVGMVVGTILGVVLFKGIPV).

Belongs to the UPF0756 family.

It is found in the cell membrane. This chain is UPF0756 membrane protein STH2648, found in Symbiobacterium thermophilum (strain DSM 24528 / JCM 14929 / IAM 14863 / T).